A 375-amino-acid chain; its full sequence is Succinyl-diaminopimelate desuccinylase (375 aa).

His-66 contacts Zn(2+). Residue Asp-68 is part of the active site. Asp-99 provides a ligand contact to Zn(2+). Glu-133 functions as the Proton acceptor in the catalytic mechanism. Zn(2+) is bound by residues Glu-134, Glu-162, and His-348.

This sequence belongs to the peptidase M20A family. DapE subfamily. In terms of assembly, homodimer. Zn(2+) serves as cofactor. The cofactor is Co(2+).

It catalyses the reaction N-succinyl-(2S,6S)-2,6-diaminopimelate + H2O = (2S,6S)-2,6-diaminopimelate + succinate. The protein operates within amino-acid biosynthesis; L-lysine biosynthesis via DAP pathway; LL-2,6-diaminopimelate from (S)-tetrahydrodipicolinate (succinylase route): step 3/3. Its function is as follows. Catalyzes the hydrolysis of N-succinyl-L,L-diaminopimelic acid (SDAP), forming succinate and LL-2,6-diaminopimelate (DAP), an intermediate involved in the bacterial biosynthesis of lysine and meso-diaminopimelic acid, an essential component of bacterial cell walls. The polypeptide is Succinyl-diaminopimelate desuccinylase (Janthinobacterium sp. (strain Marseille) (Minibacterium massiliensis)).